The chain runs to 147 residues: S-protein homolog 10 (147 aa).

Positions 1-20 (MNCFSYFFLVIILCAGLNNA) are cleaved as a signal peptide.

It belongs to the plant self-incompatibility (S1) protein family.

It localises to the secreted. This Arabidopsis thaliana (Mouse-ear cress) protein is S-protein homolog 10.